A 128-amino-acid polypeptide reads, in one-letter code: Small nuclear ribonucleoprotein SmD3a (128 aa).

Positions 7-79 (IPVKLLHESS…VRFLVIPDML (73 aa)) constitute a Sm domain. Residues 90-128 (GKGKSASLGVGRGRGAAMRAKGTGRGTGGGRGAVPPVRR) form a disordered region. The segment covering 112-121 (TGRGTGGGRG) has biased composition (gly residues).

Belongs to the snRNP core protein family. Expressed in young seedlings, roots, leaves, flowers and immature siliques.

The protein localises to the cytoplasm. It localises to the cytosol. Its subcellular location is the nucleus. Core component of the spliceosomal U1, U2, U4 and U5 small nuclear ribonucleoproteins (snRNPs), the building blocks of the spliceosome. May play a minor role in the splicing of cellular pre-mRNAs. The sequence is that of Small nuclear ribonucleoprotein SmD3a from Arabidopsis thaliana (Mouse-ear cress).